The sequence spans 1246 residues: Stromal processing peptidase, chloroplastic (1246 aa).

A chloroplast-targeting transit peptide spans 1 to 136 (MASFPSPPLA…AKIRRRHVLH (136 aa)). Position 228 (histidine 228) interacts with Zn(2+). Catalysis depends on glutamate 231, which acts as the Proton acceptor. Histidine 232 contacts Zn(2+). The active site involves glutamate 302. Residue glutamate 309 coordinates Zn(2+).

The protein belongs to the peptidase M16 family. The cofactor is Zn(2+). Widely expressed.

Its subcellular location is the plastid. The protein resides in the chloroplast stroma. Functionally, cleaves presequences (transit peptides) from chloroplastic protein precursors. Initially recognizes a precursor by binding to the C-terminus of its transit peptide and then removes the transit peptide in a single endoproteolytic step. In a next step, pursues the cleavage of transit peptide to a subfragment form. The sequence is that of Stromal processing peptidase, chloroplastic from Oryza sativa subsp. indica (Rice).